The sequence spans 414 residues: 2,3-diketo-5-methylthiopentyl-1-phosphate enolase (414 aa).

Lys99 (proton acceptor) is an active-site residue. Residues Lys148, 174–177 (KDDE), His265, Gly338, and 360–361 (GG) contribute to the substrate site. Positions 174, 176, and 177 each coordinate Mg(2+). N6-carboxylysine is present on Lys174.

Belongs to the RuBisCO large chain family. Type IV subfamily. As to quaternary structure, homodimer. Mg(2+) is required as a cofactor.

It carries out the reaction 5-methylsulfanyl-2,3-dioxopentyl phosphate = 2-hydroxy-5-methylsulfanyl-3-oxopent-1-enyl phosphate. It participates in amino-acid biosynthesis; L-methionine biosynthesis via salvage pathway; L-methionine from S-methyl-5-thio-alpha-D-ribose 1-phosphate: step 3/6. Its function is as follows. Catalyzes the enolization of 2,3-diketo-5-methylthiopentyl-1-phosphate (DK-MTP-1-P) into 2-hydroxy-3-keto-5-methylthiopentenyl-1-phosphate (HK-MTPenyl-1-P). The chain is 2,3-diketo-5-methylthiopentyl-1-phosphate enolase from Bacillus thuringiensis (strain Al Hakam).